The primary structure comprises 288 residues: MSDSGEQNYGERESRSASRSGSAHGSGKSARHTPARSRSKEDSRRSRSKSRSRSESRSRSRRSSRRHYTRSRSRSRSHRRSRSRSYSRDYRRRHSHSHSPMSTRRRHVGNRANPDPNCCLGVFGLSLYTTERDLREVFSKYGPIADVSIVYDQQSRRSRGFAFVYFENVDDAKEAKERANGMELDGRRIRVDFSITKRPHTPTPGIYMGRPTYGSSRRRDYYDRGYDRGYDDRDYYSRSYRGGGGGGGGWRAAQDRDQIYRRRSPSPYYSRGGYRSRSRSRSYSPRRY.

Disordered regions lie at residues 1-114 (MSDS…RANP) and 196-225 (TKRPHTPTPGIYMGRPTYGSSRRRDYYDRG). Position 2 is an N-acetylserine (Ser-2). Ser-2, Ser-4, and Ser-14 each carry phosphoserine. The span at 17–28 (ASRSGSAHGSGK) shows a compositional bias: low complexity. The residue at position 29 (Ser-29) is a Phosphoserine. At Thr-33 the chain carries Phosphothreonine. The span at 59–109 (RSRRSSRRHYTRSRSRSRSHRRSRSRSYSRDYRRRHSHSHSPMSTRRRHVG) shows a compositional bias: basic residues. Phosphoserine occurs at positions 83, 85, 87, 95, 97, and 99. The residue at position 103 (Thr-103) is a Phosphothreonine. In terms of domain architecture, RRM spans 118–196 (CCLGVFGLSL…RRIRVDFSIT (79 aa)). The linker stretch occupies residues 193-230 (FSITKRPHTPTPGIYMGRPTYGSSRRRDYYDRGYDRGY). Residue Lys-197 forms a Glycyl lysine isopeptide (Lys-Gly) (interchain with G-Cter in SUMO2) linkage. Phosphothreonine is present on residues Thr-201 and Thr-203. Residues Ser-215 and Ser-237 each carry the phosphoserine modification. Arg-241 carries the asymmetric dimethylarginine; alternate modification. Arg-241 carries the post-translational modification Dimethylated arginine; alternate. At Arg-241 the chain carries Omega-N-methylarginine; alternate. Positions 242 to 288 (GGGGGGGGWRAAQDRDQIYRRRSPSPYYSRGGYRSRSRSRSYSPRRY) are disordered. Over residues 274-288 (YRSRSRSRSYSPRRY) the composition is skewed to basic residues.

This sequence belongs to the splicing factor SR family. Found in a pre-mRNA exonic splicing enhancer (ESE) complex with TRA2B/SFRS10, SNRNP70, SNRPA1 and SRRM1. Binds to A3 enhancer proteins SFRS4, SFRS5, SFRS6 and SFRS9. Interacts with CPSF6, RBMY1A1, RBMX, RNPS1 and phosphorylated SFRS13A. Interacts with SAFB/SAFB1. Interacts with ILDR1 (via C-terminus) and ILDR2. Phosphorylated in the RS domains.

The protein resides in the nucleus. Functionally, sequence-specific RNA-binding protein which participates in the control of pre-mRNA splicing. Can either activate or suppress exon inclusion. Acts additively with RBMX to promote exon 7 inclusion of the survival motor neuron SMN2. Activates the splicing of MAPT/Tau exon 10. Alters pre-mRNA splicing patterns by antagonizing the effects of splicing regulators, like RBMX. Binds to the AG-rich SE2 domain in the SMN exon 7 RNA. Binds to pre-mRNA. The polypeptide is Transformer-2 protein homolog beta (TRA2B) (Bos taurus (Bovine)).